The following is a 214-amino-acid chain: MIVEQIMKRDVITLTKTDTLETAICKLKEFHIRHLPVVDEERHVIGMITDRDMKQASPSIFEENKRSLFLTRSVDSIMKKDVVCAHPLDFVEEISAVFYEHGIGCLPVVHHQKLIGILTKTDLLRTFVKLTGADQPGSQIEIKVNDITKSLAEISSLCQDLQVKILSVLVYPHDDPGVKVLVFRVKTMNPLPFLQALQRNGHHVVWPSEQRDLL.

2 CBS domains span residues 7–66 (MKRD…ENKR) and 78–135 (MKKD…GADQ).

Interacts with YabA.

It functions in the pathway ketone degradation; acetoin degradation. Its function is as follows. Role in growth and sporulation on acetoin or butanediol. Involved in the breakdown of these compounds used as a carbon source. The sequence is that of Acetoin utilization protein AcuB (acuB) from Bacillus subtilis (strain 168).